We begin with the raw amino-acid sequence, 437 residues long: tRNA-2-methylthio-N(6)-dimethylallyladenosine synthase (437 aa).

The MTTase N-terminal domain occupies 1 to 115 (MKVYIETMGC…ISQVIHKEKA (115 aa)). Residues Cys-10, Cys-46, Cys-78, Cys-148, Cys-152, and Cys-155 each coordinate [4Fe-4S] cluster. The Radical SAM core domain maps to 134–367 (KKAQIRSLLN…QNRHKEILEE (234 aa)). Residues 370–436 (KLEVGKTHVV…KGRLMATTKG (67 aa)) form the TRAM domain.

It belongs to the methylthiotransferase family. MiaB subfamily. As to quaternary structure, monomer. The cofactor is [4Fe-4S] cluster.

The protein localises to the cytoplasm. It carries out the reaction N(6)-dimethylallyladenosine(37) in tRNA + (sulfur carrier)-SH + AH2 + 2 S-adenosyl-L-methionine = 2-methylsulfanyl-N(6)-dimethylallyladenosine(37) in tRNA + (sulfur carrier)-H + 5'-deoxyadenosine + L-methionine + A + S-adenosyl-L-homocysteine + 2 H(+). Its function is as follows. Catalyzes the methylthiolation of N6-(dimethylallyl)adenosine (i(6)A), leading to the formation of 2-methylthio-N6-(dimethylallyl)adenosine (ms(2)i(6)A) at position 37 in tRNAs that read codons beginning with uridine. This chain is tRNA-2-methylthio-N(6)-dimethylallyladenosine synthase, found in Helicobacter pylori (strain G27).